A 259-amino-acid chain; its full sequence is MADS-box protein ZMM17 (259 aa).

The MADS-box domain maps to 1–61 (MGRGKIEIKR…GKMFEYCSPA (61 aa)). Residues 85-175 (DQQILLEMTR…YRMINENQQA (91 aa)) enclose the K-box domain. Positions 237-259 (PTQPNLQDPAAPCGGLHGHGLQL) are disordered.

Strong expression in female inflorescences (ears), but also weak expression in male inflorescences (tassels). At early stages of the development of the female spiklet, expressed in all organ primordia but later restricted to the ovule and the developing silk. At very late stages of development, expression becomes restricted to parts of the silk.

The protein resides in the nucleus. In terms of biological role, probable transcription factor. In Zea mays (Maize), this protein is MADS-box protein ZMM17 (M17).